The following is a 358-amino-acid chain: Glycerol-3-phosphate dehydrogenase [NAD(P)+] (358 aa).

NADPH contacts are provided by Ser-33, Phe-34, Arg-54, and Lys-128. Sn-glycerol 3-phosphate is bound by residues Lys-128 and Gly-156. Residue Ala-160 participates in NADPH binding. Lys-211, Asp-264, Ser-274, Arg-275, and Asn-276 together coordinate sn-glycerol 3-phosphate. The Proton acceptor role is filled by Lys-211. NADPH is bound at residue Arg-275. NADPH is bound by residues Val-299 and Glu-301.

The protein belongs to the NAD-dependent glycerol-3-phosphate dehydrogenase family.

It localises to the cytoplasm. The catalysed reaction is sn-glycerol 3-phosphate + NAD(+) = dihydroxyacetone phosphate + NADH + H(+). The enzyme catalyses sn-glycerol 3-phosphate + NADP(+) = dihydroxyacetone phosphate + NADPH + H(+). It participates in membrane lipid metabolism; glycerophospholipid metabolism. Its function is as follows. Catalyzes the reduction of the glycolytic intermediate dihydroxyacetone phosphate (DHAP) to sn-glycerol 3-phosphate (G3P), the key precursor for phospholipid synthesis. The protein is Glycerol-3-phosphate dehydrogenase [NAD(P)+] of Saccharophagus degradans (strain 2-40 / ATCC 43961 / DSM 17024).